Consider the following 230-residue polypeptide: UPF0173 metal-dependent hydrolase Acid_3917 (230 aa).

It belongs to the UPF0173 family.

This Solibacter usitatus (strain Ellin6076) protein is UPF0173 metal-dependent hydrolase Acid_3917.